We begin with the raw amino-acid sequence, 574 residues long: Putative diflavin flavoprotein A 3 (574 aa).

The segment at 43-236 is zinc metallo-hydrolase; sequence QNGTTYNSFL…PSVKMIATGH (194 aa). Fe cation contacts are provided by His92, Glu94, Asp96, His159, Asp178, and His236. Residues 265–409 enclose the Flavodoxin-like domain; the sequence is IGVFYVSEYG…DLGQWVTRDR (145 aa). The flavodoxin-reductase-like stretch occupies residues 410–574; the sequence is SIKAMKSLGA…VHHRKVGNHY (165 aa).

In the N-terminal section; belongs to the zinc metallo-hydrolase group 3 family. It in the C-terminal section; belongs to the flavodoxin reductase family. It depends on Fe cation as a cofactor.

In terms of biological role, mediates electron transfer from NADH to oxygen, reducing it to water. This modular protein has 3 redox cofactors, in other organisms the same activity requires 2 or 3 proteins. The chain is Putative diflavin flavoprotein A 3 (dfa3) from Nostoc sp. (strain PCC 7120 / SAG 25.82 / UTEX 2576).